Reading from the N-terminus, the 226-residue chain is 7-cyano-7-deazaguanine synthase (226 aa).

Residue 10–20 (FSGGQDSTTLA) participates in ATP binding. The Zn(2+) site is built by Cys190, Cys205, Cys208, and Cys211.

The protein belongs to the QueC family. Zn(2+) serves as cofactor.

It carries out the reaction 7-carboxy-7-deazaguanine + NH4(+) + ATP = 7-cyano-7-deazaguanine + ADP + phosphate + H2O + H(+). Its pathway is purine metabolism; 7-cyano-7-deazaguanine biosynthesis. Its function is as follows. Catalyzes the ATP-dependent conversion of 7-carboxy-7-deazaguanine (CDG) to 7-cyano-7-deazaguanine (preQ(0)). This Helicobacter pylori (strain ATCC 700392 / 26695) (Campylobacter pylori) protein is 7-cyano-7-deazaguanine synthase.